Here is a 271-residue protein sequence, read N- to C-terminus: Acetyl-coenzyme A carboxylase carboxyl transferase subunit alpha (271 aa).

A CoA carboxyltransferase C-terminal domain is found at 1-247 (MSRELIRTVD…KKTILEALGE (247 aa)).

Belongs to the AccA family. Acetyl-CoA carboxylase is a heterohexamer composed of biotin carboxyl carrier protein (AccB), biotin carboxylase (AccC) and two subunits each of ACCase subunit alpha (AccA) and ACCase subunit beta (AccD).

The protein resides in the cytoplasm. It carries out the reaction N(6)-carboxybiotinyl-L-lysyl-[protein] + acetyl-CoA = N(6)-biotinyl-L-lysyl-[protein] + malonyl-CoA. It participates in lipid metabolism; malonyl-CoA biosynthesis; malonyl-CoA from acetyl-CoA: step 1/1. In terms of biological role, component of the acetyl coenzyme A carboxylase (ACC) complex. First, biotin carboxylase catalyzes the carboxylation of biotin on its carrier protein (BCCP) and then the CO(2) group is transferred by the carboxyltransferase to acetyl-CoA to form malonyl-CoA. The protein is Acetyl-coenzyme A carboxylase carboxyl transferase subunit alpha of Clostridium perfringens (strain SM101 / Type A).